We begin with the raw amino-acid sequence, 801 residues long: Probable inorganic carbon transporter subunit DabA (801 aa).

The Zn(2+) site is built by cysteine 332, aspartate 334, histidine 500, and cysteine 515.

It belongs to the inorganic carbon transporter (TC 9.A.2) DabA family. As to quaternary structure, forms a complex with DabB. Zn(2+) is required as a cofactor.

The protein resides in the cell inner membrane. Functionally, part of an energy-coupled inorganic carbon pump. The polypeptide is Probable inorganic carbon transporter subunit DabA (Marinobacter nauticus (strain ATCC 700491 / DSM 11845 / VT8) (Marinobacter aquaeolei)).